Consider the following 129-residue polypeptide: Serum amyloid A protein (129 aa).

Residues 1–18 (MKLFPGLLFCSLVLGVSG) form the signal peptide. Gln-19 bears the Pyrrolidone carboxylic acid mark. Residues 92–129 (GDSGHGAEDSKADQAANEWGRSGKDPNHFRPAGLPDKY) are disordered. The propeptide at 112–129 (RSGKDPNHFRPAGLPDKY) is often cleaved during amyloidogenesis.

It belongs to the SAA family. In terms of processing, this protein is the precursor of amyloid protein A, which is formed by the removal of residues from the C-terminal end. Expressed by the liver; secreted in plasma.

The protein resides in the secreted. Its function is as follows. Major acute phase reactant. Apolipoprotein of the HDL complex. This chain is Serum amyloid A protein (SAA1), found in Canis lupus familiaris (Dog).